Consider the following 480-residue polypeptide: Ribosomal protein uS12 methylthiotransferase RimO (480 aa).

In terms of domain architecture, MTTase N-terminal spans 14–135 (LSVAMVTLGC…IAARLRSIVA (122 aa)). [4Fe-4S] cluster-binding residues include cysteine 23, cysteine 59, cysteine 98, cysteine 193, cysteine 197, and cysteine 200. One can recognise a Radical SAM core domain in the interval 179–410 (LDDGPTAALK…DLVEELTSQR (232 aa)). Residues 412–480 (AERLGEQVEV…EGADLDARPL (69 aa)) enclose the TRAM domain.

The protein belongs to the methylthiotransferase family. RimO subfamily. [4Fe-4S] cluster is required as a cofactor.

It localises to the cytoplasm. It carries out the reaction L-aspartate(89)-[ribosomal protein uS12]-hydrogen + (sulfur carrier)-SH + AH2 + 2 S-adenosyl-L-methionine = 3-methylsulfanyl-L-aspartate(89)-[ribosomal protein uS12]-hydrogen + (sulfur carrier)-H + 5'-deoxyadenosine + L-methionine + A + S-adenosyl-L-homocysteine + 2 H(+). In terms of biological role, catalyzes the methylthiolation of an aspartic acid residue of ribosomal protein uS12. The protein is Ribosomal protein uS12 methylthiotransferase RimO of Nocardioides sp. (strain ATCC BAA-499 / JS614).